The chain runs to 523 residues: Sensory neuron membrane protein 1 (523 aa).

Over 1-11 the chain is Cytoplasmic; the sequence is MQLPKELKYAA. The chain crosses the membrane as a helical span at residues 12–32; it reads IAGGVALFGLIFGWVLFPTIL. Topologically, residues 33–458 are extracellular; it reads KSQLKKEMAL…HQLFIPKRVV (426 aa). Residues asparagine 67 and asparagine 229 are each glycosylated (N-linked (GlcNAc...) asparagine). Intrachain disulfides connect cysteine 268-cysteine 333, cysteine 297-cysteine 352, and cysteine 335-cysteine 341. A glycan (N-linked (GlcNAc...) asparagine) is linked at asparagine 440. A helical transmembrane segment spans residues 459 to 479; sequence GVLRWWVVSFGSLGAVIGIVF. Over 480–523 the chain is Cytoplasmic; that stretch reads HFRDHIMRLAVSGDTKVSKVTPEEPEQKDISVIGQAQEPAKVNI.

This sequence belongs to the CD36 family. In terms of tissue distribution, detected in sensory neurons in the antenna.

The protein resides in the cell membrane. Its function is as follows. Plays an olfactory role that is not restricted to pheromone sensitivity. This Heliothis virescens (Tobacco budworm moth) protein is Sensory neuron membrane protein 1.